The chain runs to 242 residues: Biosynthetic peptidoglycan transglycosylase (242 aa).

The helical transmembrane segment at 19-39 (LMVVLAVFWGGGIALFSVAPV) threads the bilayer.

Belongs to the glycosyltransferase 51 family.

The protein resides in the cell inner membrane. It carries out the reaction [GlcNAc-(1-&gt;4)-Mur2Ac(oyl-L-Ala-gamma-D-Glu-L-Lys-D-Ala-D-Ala)](n)-di-trans,octa-cis-undecaprenyl diphosphate + beta-D-GlcNAc-(1-&gt;4)-Mur2Ac(oyl-L-Ala-gamma-D-Glu-L-Lys-D-Ala-D-Ala)-di-trans,octa-cis-undecaprenyl diphosphate = [GlcNAc-(1-&gt;4)-Mur2Ac(oyl-L-Ala-gamma-D-Glu-L-Lys-D-Ala-D-Ala)](n+1)-di-trans,octa-cis-undecaprenyl diphosphate + di-trans,octa-cis-undecaprenyl diphosphate + H(+). The protein operates within cell wall biogenesis; peptidoglycan biosynthesis. Its function is as follows. Peptidoglycan polymerase that catalyzes glycan chain elongation from lipid-linked precursors. The chain is Biosynthetic peptidoglycan transglycosylase from Escherichia coli (strain ATCC 8739 / DSM 1576 / NBRC 3972 / NCIMB 8545 / WDCM 00012 / Crooks).